A 1043-amino-acid polypeptide reads, in one-letter code: Constitutive coactivator of PPAR-gamma-like protein 1 homolog (1043 aa).

2 disordered regions span residues serine 353–isoleucine 497 and tyrosine 929–glutamate 1043. Composition is skewed to polar residues over residues glutamine 362–proline 375 and serine 405–aspartate 419. 2 stretches are compositionally biased toward basic and acidic residues: residues threonine 451–lysine 471 and glutamate 951–lysine 964. Positions valine 801–glutamate 1043 are RNA binding. The segment covering glutamate 995–serine 1010 has biased composition (low complexity).

It belongs to the constitutive coactivator of PPAR-gamma family.

It localises to the cytoplasm. It is found in the cell membrane. Its function is as follows. May bee involved in the oxidative stress-induced survival signaling. Binds RNA. May participate in mRNA transport in the cytoplasm. The sequence is that of Constitutive coactivator of PPAR-gamma-like protein 1 homolog (fam120a) from Xenopus tropicalis (Western clawed frog).